We begin with the raw amino-acid sequence, 264 residues long: Thymidylate synthase (264 aa).

R21 contacts dUMP. Residue H51 participates in (6R)-5,10-methylene-5,6,7,8-tetrahydrofolate binding. 126 to 127 lines the dUMP pocket; that stretch reads RR. The active-site Nucleophile is C146. DUMP is bound by residues 166-169, N177, and 207-209; these read RSAD and HLY. D169 lines the (6R)-5,10-methylene-5,6,7,8-tetrahydrofolate pocket. A263 serves as a coordination point for (6R)-5,10-methylene-5,6,7,8-tetrahydrofolate.

Belongs to the thymidylate synthase family. Bacterial-type ThyA subfamily. Homodimer.

It is found in the cytoplasm. It catalyses the reaction dUMP + (6R)-5,10-methylene-5,6,7,8-tetrahydrofolate = 7,8-dihydrofolate + dTMP. It participates in pyrimidine metabolism; dTTP biosynthesis. In terms of biological role, catalyzes the reductive methylation of 2'-deoxyuridine-5'-monophosphate (dUMP) to 2'-deoxythymidine-5'-monophosphate (dTMP) while utilizing 5,10-methylenetetrahydrofolate (mTHF) as the methyl donor and reductant in the reaction, yielding dihydrofolate (DHF) as a by-product. This enzymatic reaction provides an intracellular de novo source of dTMP, an essential precursor for DNA biosynthesis. The sequence is that of Thymidylate synthase from Nitrosomonas eutropha (strain DSM 101675 / C91 / Nm57).